A 289-amino-acid polypeptide reads, in one-letter code: Nucleotide-binding protein CHY_0272 (289 aa).

8 to 15 (GLSGAGKT) provides a ligand contact to ATP. Residue 59-62 (DVRG) coordinates GTP.

The protein belongs to the RapZ-like family.

In terms of biological role, displays ATPase and GTPase activities. The chain is Nucleotide-binding protein CHY_0272 from Carboxydothermus hydrogenoformans (strain ATCC BAA-161 / DSM 6008 / Z-2901).